The following is a 528-amino-acid chain: Importin subunit alpha-7 (528 aa).

An IBB domain is found at 1–56 (MKGGETMSVRRSGYKAVVDGVGGRRRREDDMVEIRKAKREESLLKKRREALPHSPS). 8 ARM repeats span residues 93-133 (NVRV…NIAS), 136-175 (SENT…NISG), 178-218 (PRCR…NLCR), 220-259 (KPQP…YLSD), 262-301 (NEKI…NIVT), 304-344 (DSQT…NITA), 347-386 (QSQI…NAIA), and 390-429 (YKQI…KILK).

Belongs to the importin alpha family. As to quaternary structure, forms a complex with importin subunit beta-1.

It localises to the nucleus envelope. Binds to conventional NLS motifs and mediates nuclear protein import across the nuclear envelope. Acts as a cellular receptor for the nuclear import of the virD2 protein of Agrobacterium, but is not essential for Agrobacterium-mediated root transformation. The protein is Importin subunit alpha-7 of Arabidopsis thaliana (Mouse-ear cress).